The following is a 252-amino-acid chain: Ureidoacrylate amidohydrolase RutB (252 aa).

A compositionally biased stretch (polar residues) spans 1–14 (MSTPARNTTLTSNT). Residues 1–31 (MSTPARNTTLTSNTPAGAPRLPGAPAPQVLP) form a disordered region. Positions 15–27 (PAGAPRLPGAPAP) are enriched in low complexity. The active-site Proton acceptor is the D50. K159 is a catalytic residue. C192 serves as the catalytic Nucleophile.

This sequence belongs to the isochorismatase family. RutB subfamily.

The catalysed reaction is (Z)-3-ureidoacrylate + H2O + H(+) = (Z)-3-aminoacrylate + NH4(+) + CO2. The enzyme catalyses (Z)-3-ureidoacrylate + H2O = (Z)-3-aminoacrylate + carbamate + H(+). It carries out the reaction (Z)-2-methylureidoacrylate + H2O + H(+) = (Z)-2-methylaminoacrylate + NH4(+) + CO2. Hydrolyzes ureidoacrylate to form aminoacrylate and carbamate. The carbamate hydrolyzes spontaneously, thereby releasing one of the nitrogen atoms of the pyrimidine ring as ammonia and one of its carbon atoms as CO2. The protein is Ureidoacrylate amidohydrolase RutB of Variovorax paradoxus (strain S110).